We begin with the raw amino-acid sequence, 373 residues long: 3',5'-bisphosphate nucleotidase AHL (373 aa).

The Proton acceptor role is filled by Asp-52. Mg(2+) is bound by residues Glu-77, Asp-144, Val-146, and Asp-147. Residue Thr-149 is the Proton acceptor of the active site. 5 residues coordinate adenosine 3',5'-bisphosphate: Thr-149, Ser-281, Lys-284, Lys-298, and Asp-310. Residues Ser-281, Lys-284, Lys-298, and Asp-310 each coordinate AMP. Asp-310 contributes to the Mg(2+) binding site.

Belongs to the inositol monophosphatase superfamily. It depends on Mg(2+) as a cofactor. In terms of tissue distribution, expressed in roots, leaves, stems, flowers and siliques.

The catalysed reaction is adenosine 3',5'-bisphosphate + H2O = AMP + phosphate. It carries out the reaction 3'-phosphoadenylyl sulfate + H2O = adenosine 5'-phosphosulfate + phosphate. Inhibited by Li(+) (IC(50)=10 mM), Na(+) (IC(50)=50 mM) and Ca(2+) (IC(50)=0.06 mM). Phosphatase that converts adenosine 3'-phosphate 5'-phosphosulfate (PAPS) to adenosine 5'-phosphosulfate (APS) and 3'-phosphoadenosine 5'-phosphate (3'-PAP) to AMP. May regulate the flux of sulfur in the sulfur-activation pathway by converting PAPS to APS. Prevents both the toxicity of PAP on RNA processing enzymes as well as the product inhibition by PAP of sulfate conjugation. The sequence is that of 3',5'-bisphosphate nucleotidase AHL from Arabidopsis thaliana (Mouse-ear cress).